The chain runs to 329 residues: DNA-directed RNA polymerase subunit alpha (329 aa).

The tract at residues 1–234 (MQGSVTEFLK…EQLDAFVELR (234 aa)) is alpha N-terminal domain (alpha-NTD). The segment at 248–329 (FDPILLRPVD…WPPASLIDND (82 aa)) is alpha C-terminal domain (alpha-CTD).

The protein belongs to the RNA polymerase alpha chain family. As to quaternary structure, homodimer. The RNAP catalytic core consists of 2 alpha, 1 beta, 1 beta' and 1 omega subunit. When a sigma factor is associated with the core the holoenzyme is formed, which can initiate transcription.

It carries out the reaction RNA(n) + a ribonucleoside 5'-triphosphate = RNA(n+1) + diphosphate. Functionally, DNA-dependent RNA polymerase catalyzes the transcription of DNA into RNA using the four ribonucleoside triphosphates as substrates. The chain is DNA-directed RNA polymerase subunit alpha from Idiomarina loihiensis (strain ATCC BAA-735 / DSM 15497 / L2-TR).